The following is a 178-amino-acid chain: Oligoribonuclease (178 aa).

An Exonuclease domain is found at 7 to 168 (LIWIDLEMTG…DDIRESIAEL (162 aa)). Tyrosine 128 is a catalytic residue.

The protein belongs to the oligoribonuclease family.

It is found in the cytoplasm. Functionally, 3'-to-5' exoribonuclease specific for small oligoribonucleotides. This chain is Oligoribonuclease, found in Francisella tularensis subsp. tularensis (strain FSC 198).